Consider the following 164-residue polypeptide: MYRIRVFGDPVLRKRAKPVTKFDDNLKKTIERMIETMYHYDGVGLAAPQVGISQRFFVMDVGNGPVAVINPEILEIDPETEVAEEGCLSFPEIFVEIERSKRIKVKYQNTRGEYVEEELEGYAARVFQHEFDHLNGVLIIDRISPAKRLLLRKKLMDIARTVKR.

Fe cation is bound by residues Cys-87 and His-129. Glu-130 is an active-site residue. His-133 contributes to the Fe cation binding site.

It belongs to the polypeptide deformylase family. Fe(2+) serves as cofactor.

It catalyses the reaction N-terminal N-formyl-L-methionyl-[peptide] + H2O = N-terminal L-methionyl-[peptide] + formate. Functionally, removes the formyl group from the N-terminal Met of newly synthesized proteins. Requires at least a dipeptide for an efficient rate of reaction. N-terminal L-methionine is a prerequisite for activity but the enzyme has broad specificity at other positions. The protein is Peptide deformylase of Thermotoga sp. (strain RQ2).